The following is a 554-amino-acid chain: Glucose-binding protein GlcS (554 aa).

Topologically, residues 1-17 (MKRKYPYSLAKGLTSTQ) are cytoplasmic. The helical transmembrane segment at 18-38 (IAVIVAVIVIVIIIGVVAGFV) threads the bilayer. The Extracellular segment spans residues 39–525 (LTKGPSTTAV…YGLTNNTQKT (487 aa)). Residues 526 to 546 (SNSVMLFLLPFLALPLAIASI) traverse the membrane as a helical segment. The Cytoplasmic portion of the chain corresponds to 547 to 554 (DNKYYLLK).

This sequence belongs to the bacterial solute-binding protein 1 family. As to quaternary structure, the complex is composed of two ATP-binding proteins (GlcV), two transmembrane proteins (GlcT and GlcU) and a solute-binding protein (GlcS).

Its subcellular location is the cell membrane. Its activity is regulated as follows. Binding of glucose is strongly inhibited by galactose and mannose. Functionally, part of the ABC transporter complex GlcSTUV involved in glucose uptake. Binds glucose. Can also bind galactose and mannose. The protein is Glucose-binding protein GlcS of Saccharolobus solfataricus (strain ATCC 35092 / DSM 1617 / JCM 11322 / P2) (Sulfolobus solfataricus).